We begin with the raw amino-acid sequence, 359 residues long: Mitochondrial glutathione transporter SLC25A39 (359 aa).

The Mitochondrial intermembrane segment spans residues 1-14 (MDDQDPGGISPLQQ). Solcar repeat units follow at residues 9–151 (ISPL…LKAF), 159–243 (SDLY…VKSW), and 253–347 (TSVG…GKSF). Residues 15–35 (MVASGAGAVVTSLFMTPLDVV) form a helical membrane-spanning segment. The Mitochondrial matrix portion of the chain corresponds to 36 to 121 (KVRLQSQRPS…VKIVRHEGTR (86 aa)). 4 residues coordinate [2Fe-2S] cluster: C74, C78, C88, and C94. A helical transmembrane segment spans residues 122 to 142 (TLWSGLPATLVMTVPATAIYF). Topologically, residues 143-164 (TAYDQLKAFLCGQSLTSDLYAP) are mitochondrial intermembrane. A helical transmembrane segment spans residues 165 to 185 (MVAGALARMGTVTVVSPLELV). Topologically, residues 186 to 214 (RTKLQAQHVSYRELASSVQAAVTQGGWRS) are mitochondrial matrix. Residues 215–235 (LWLGWGPTALRDVPFSALYWF) form a helical membrane-spanning segment. Residues 236-255 (NYELVKSWLSGLRPKDQTSV) lie on the Mitochondrial intermembrane side of the membrane. Residues 256–276 (GISFVAGGISGMVAATLTLPF) traverse the membrane as a helical segment. Topologically, residues 277–317 (DVVKTQRQMSLGAVEAVRVKPPRVDSTWLLLRRIRAESGTR) are mitochondrial matrix. The helical transmembrane segment at 318–338 (GLFAGFLPRIIKAAPSCAIMI) threads the bilayer. Residues 339 to 359 (STYEFGKSFFQRLNQEQPLGR) lie on the Mitochondrial intermembrane side of the membrane.

The protein belongs to the mitochondrial carrier (TC 2.A.29) family. Post-translationally, cleaved and degraded by AFG3L2; degradation by AFG3L2 is regulated by the ability of SLC25A39 to bind iron-sulfur. In absence of mitochondrial glutathione, SLC25A39 binds iron-sulfur, preventing cleavage and degradation by AFG3L2. The presence of mitochondrial glutathione prevents iron-sulfur-binding to SLC25A39, promoting cleavage and degradation by AFG3L2. In terms of tissue distribution, abundant expression in bone marrow, spleen, testis and kidney.

Its subcellular location is the mitochondrion inner membrane. It carries out the reaction glutathione(in) = glutathione(out). With respect to regulation, the activity of SLC25A39 is regulated by levels of mitochondrial glutathione via its ability to bind [2Fe-2S] iron-sulfur cluster. Upon physiological levels of mitochondrial glutathione, glutathione prevents iron-sulfur-binding to SLC25A39 promoting cleavage and degradation by AFG3L2. Upon depletion of mitochondrial glutathione, SLC25A39 binds iron-sulfur, preventing cleavage and degradation by AFG3L2. Its function is as follows. Mitochondrial transporter required for glutathione import into mitochondria. Glutathione, which plays key roles in oxidative metabolism, is produced exclusively in the cytosol and is imported in many organelles. Mitochondrial glutathione is required for the activity and stability of proteins containing iron-sulfur clusters, as well as erythropoiesis. The sequence is that of Mitochondrial glutathione transporter SLC25A39 from Mus musculus (Mouse).